The following is a 565-amino-acid chain: Dihydroxy-acid dehydratase (565 aa).

Position 80 (Asp80) interacts with Mg(2+). Cys121 lines the [2Fe-2S] cluster pocket. Asp122 and Lys123 together coordinate Mg(2+). N6-carboxylysine is present on Lys123. Residue Cys194 participates in [2Fe-2S] cluster binding. Position 447 (Glu447) interacts with Mg(2+). Ser473 functions as the Proton acceptor in the catalytic mechanism.

Belongs to the IlvD/Edd family. Homodimer. It depends on [2Fe-2S] cluster as a cofactor. Mg(2+) is required as a cofactor.

It carries out the reaction (2R)-2,3-dihydroxy-3-methylbutanoate = 3-methyl-2-oxobutanoate + H2O. The catalysed reaction is (2R,3R)-2,3-dihydroxy-3-methylpentanoate = (S)-3-methyl-2-oxopentanoate + H2O. It participates in amino-acid biosynthesis; L-isoleucine biosynthesis; L-isoleucine from 2-oxobutanoate: step 3/4. Its pathway is amino-acid biosynthesis; L-valine biosynthesis; L-valine from pyruvate: step 3/4. Functions in the biosynthesis of branched-chain amino acids. Catalyzes the dehydration of (2R,3R)-2,3-dihydroxy-3-methylpentanoate (2,3-dihydroxy-3-methylvalerate) into 2-oxo-3-methylpentanoate (2-oxo-3-methylvalerate) and of (2R)-2,3-dihydroxy-3-methylbutanoate (2,3-dihydroxyisovalerate) into 2-oxo-3-methylbutanoate (2-oxoisovalerate), the penultimate precursor to L-isoleucine and L-valine, respectively. The sequence is that of Dihydroxy-acid dehydratase from Chlorobium luteolum (strain DSM 273 / BCRC 81028 / 2530) (Pelodictyon luteolum).